A 139-amino-acid chain; its full sequence is Cellular retinoic acid-binding protein 2 (139 aa).

The Nuclear localization signal motif lies at 21–31; sequence KALGVNMMMRK. K103 is covalently cross-linked (Glycyl lysine isopeptide (Lys-Gly) (interchain with G-Cter in SUMO)). 134 to 136 contacts all-trans-retinoate; it reads RVY.

Belongs to the calycin superfamily. Fatty-acid binding protein (FABP) family. Interacts with importin alpha, RXR and RARA. Post-translationally, sumoylated in response to retinoic acid binding, sumoylation is critical for dissociation from ER and subsequent nuclear translocation.

It localises to the cytoplasm. It is found in the endoplasmic reticulum. The protein resides in the nucleus. Transports retinoic acid to the nucleus. Regulates the access of retinoic acid to the nuclear retinoic acid receptors. The polypeptide is Cellular retinoic acid-binding protein 2 (Crabp2) (Rattus norvegicus (Rat)).